Here is a 755-residue protein sequence, read N- to C-terminus: 17S U2 SnRNP complex component HTATSF1 (755 aa).

Disordered regions lie at residues M1–D53 and G81–S122. S2 is subject to N-acetylserine. The segment covering E90–S122 has biased composition (basic and acidic residues). 2 RRM domains span residues T133–F218 and R264–G349. Residues R259–Y353 are U2AF homology motif (UHM). K297 is modified (N6-acetyllysine). Residues R380–E415 form a disordered region. A mediates interaction with the P-TEFb complex region spans residues G381–I755. A phosphoserine mark is found at S387, S403, S407, and S409. Positions H405–E415 are enriched in polar residues. Residues K429 and K430 each participate in a glycyl lysine isopeptide (Lys-Gly) (interchain with G-Cter in SUMO2) cross-link. The interval K433 to I755 is disordered. Residues S445, S452, and S453 each carry the phosphoserine modification. The segment covering C462–F476 has biased composition (basic and acidic residues). A phosphoserine mark is found at S481, S485, S494, S498, S521, and S529. Basic and acidic residues predominate over residues L508 to E538. The segment covering S539–C552 has biased composition (acidic residues). Residues S553 to R563 are compositionally biased toward basic and acidic residues. Phosphoserine is present on residues S557, S561, and S579. Acidic residues predominate over residues E564 to S579. The segment covering E580–K590 has biased composition (basic and acidic residues). Residues E591–G606 are compositionally biased toward acidic residues. A phosphoserine mark is found at S597, S600, S607, S616, and S624. Acidic residues-rich tracts occupy residues E613–T633 and D640–A651. A Phosphothreonine modification is found at T633. Residue S642 is modified to Phosphoserine. The span at D652 to E674 shows a compositional bias: basic and acidic residues. Residues E675–S713 are compositionally biased toward acidic residues. A phosphoserine mark is found at S676, S702, S713, S714, and S721. The segment covering S714–G725 has biased composition (basic and acidic residues). S748 carries the post-translational modification Phosphoserine; by CK2.

The protein belongs to the HTATSF1 family. As to quaternary structure, component of the 17S U2 SnRNP complex, a ribonucleoprotein complex that contains small nuclear RNA (snRNA) U2 and a number of specific proteins. Within the 17S U2 SnRNP complex, interacts (via UHM region) directly with SF3B1. Component of a complex which is at least composed of HTATSF1/Tat-SF1, the P-TEFb complex components CDK9 and CCNT1, RNA polymerase II, SUPT5H, and NCL/nucleolin. Interacts with GTF2F2/RAP30 and POLR2A. Interacts with TCERG1/CA150. Interacts with (poly-ADP-ribosylated) RPA1; promoting HTATSF1 recruitment to DNA damage sites. Interacts (when phosphorylated) with TOPBP1; promoting recruitment of TOPBP1 to DNA damage sites during S-phase. In terms of processing, phosphorylation at Ser-748 by CK2 during S-phase in response to DNA damage promotes interaction with TOPBP1 and double-strand break (DSB) repair via homologous recombination. In terms of tissue distribution, widely expressed.

Its subcellular location is the nucleus. It is found in the chromosome. In terms of biological role, component of the 17S U2 SnRNP complex of the spliceosome, a large ribonucleoprotein complex that removes introns from transcribed pre-mRNAs. The 17S U2 SnRNP complex (1) directly participates in early spliceosome assembly and (2) mediates recognition of the intron branch site during pre-mRNA splicing by promoting the selection of the pre-mRNA branch-site adenosine, the nucleophile for the first step of splicing. Within the 17S U2 SnRNP complex, HTATSF1 is required to stabilize the branchpoint-interacting stem loop. HTATSF1 is displaced from the 17S U2 SnRNP complex before the stable addition of the 17S U2 SnRNP complex to the spliceosome, destabilizing the branchpoint-interacting stem loop and allowing to probe intron branch site sequences. Also acts as a regulator of transcriptional elongation, possibly by mediating the reciprocal stimulatory effect of splicing on transcriptional elongation. Involved in double-strand break (DSB) repair via homologous recombination in S-phase by promoting the recruitment of TOPBP1 to DNA damage sites. Mechanistically, HTATSF1 is (1) recruited to DNA damage sites in S-phase via interaction with poly-ADP-ribosylated RPA1 and (2) phosphorylated by CK2, promoting recruitment of TOPBP1, thereby facilitating RAD51 nucleofilaments formation and RPA displacement, followed by homologous recombination. (Microbial infection) In case of infection by HIV-1, it is up-regulated by the HIV-1 proteins NEF and gp120, acts as a cofactor required for the Tat-enhanced transcription of the virus. The polypeptide is 17S U2 SnRNP complex component HTATSF1 (Homo sapiens (Human)).